A 492-amino-acid polypeptide reads, in one-letter code: GTPase Obg (492 aa).

Residues 2–159 form the Obg domain; the sequence is PRFVDRVVIH…RELTLELKTV (158 aa). The OBG-type G domain occupies 160-340; sequence ADVGLIGFPS…LIFGLWQMIS (181 aa). GTP-binding positions include 166-173, 191-195, 212-215, 292-295, and 321-323; these read GFPSAGKS, FTTLV, DVPG, NKID, and STV. Positions 173 and 193 each coordinate Mg(2+). Residues 358-438 form the OCT domain; the sequence is PVPVDDSGFR…IGDMTFDWEP (81 aa). A disordered region spans residues 449-492; sequence SGRGTDARLERTERVGAAERKAARRQRRTGDDAERGTTERGENT. 2 stretches are compositionally biased toward basic and acidic residues: residues 453-469 and 476-492; these read TDAR…AERK and RTGD…GENT.

Belongs to the TRAFAC class OBG-HflX-like GTPase superfamily. OBG GTPase family. In terms of assembly, monomer. Mg(2+) is required as a cofactor.

It localises to the cytoplasm. Its function is as follows. An essential GTPase which binds GTP, GDP and possibly (p)ppGpp with moderate affinity, with high nucleotide exchange rates and a fairly low GTP hydrolysis rate. Plays a role in control of the cell cycle, stress response, ribosome biogenesis and in those bacteria that undergo differentiation, in morphogenesis control. This is GTPase Obg from Mycobacterium avium (strain 104).